A 332-amino-acid polypeptide reads, in one-letter code: D-alanine--D-alanine ligase (332 aa).

The 206-residue stretch at 124-329 (KMWFSALNIP…FPDYLLSNIN (206 aa)) folds into the ATP-grasp domain. Residue 154–209 (ALVNWGSIFVKAASQGSSVGCYRIDNQEDVASTLAQAFTYSDYVIVEKTISARELE) participates in ATP binding. Mg(2+)-binding residues include Asp-283, Glu-296, and Asn-298.

Belongs to the D-alanine--D-alanine ligase family. Mg(2+) serves as cofactor. Requires Mn(2+) as cofactor.

It is found in the cytoplasm. The enzyme catalyses 2 D-alanine + ATP = D-alanyl-D-alanine + ADP + phosphate + H(+). It functions in the pathway cell wall biogenesis; peptidoglycan biosynthesis. Functionally, cell wall formation. This is D-alanine--D-alanine ligase from Shewanella piezotolerans (strain WP3 / JCM 13877).